Here is a 1391-residue protein sequence, read N- to C-terminus: Leucine-rich PPR motif-containing protein, mitochondrial (1391 aa).

The transit peptide at 1–42 directs the protein to the mitochondrion; sequence MSALLAGARFLLRPGLRALPAPCVRLSPGQGRYLNNTPGHFA. PPR repeat units follow at residues 110 to 144, 145 to 179, 180 to 214, 215 to 249, 250 to 284, 389 to 425, 704 to 738, 741 to 775, 779 to 813, 815 to 850, 948 to 982, 1028 to 1062, 1063 to 1093, 1100 to 1134, and 1310 to 1344; these read LLRS…GAVF, DVSH…NVQP, NRVT…DLPI, TEAV…GIEP, GPET…EGSL, NLHS…GMPV, AIGT…DSSA, DTSK…DVPL, TTTS…GLAK, TSNL…NCMP, RDDM…NVIP, PESS…GTAM, SASA…AENH, NDAA…DKVP, and RETA…SVSP. Positions 1118–1387 are RNA-binding; it reads KDALASLKAM…KLKKDKADSY (270 aa).

The protein resides in the mitochondrion. The protein localises to the nucleus. Its function is as follows. May play a role in RNA metabolism in both nuclei and mitochondria. May bind mature mRNA in the nucleus outer membrane. In mitochondria binds to poly(A) mRNA. May be involved in transcription regulation. Binds single-stranded DNA. This Xenopus tropicalis (Western clawed frog) protein is Leucine-rich PPR motif-containing protein, mitochondrial (lrpprc).